A 272-amino-acid chain; its full sequence is Streptomycin 3''-kinase (272 aa).

Catalysis depends on D190, which acts as the Proton acceptor.

It belongs to the aminoglycoside phosphotransferase family.

The catalysed reaction is streptomycin + ATP = streptomycin 3''-phosphate + ADP + H(+). Functionally, the aminoglycoside phosphotransferases achieve inactivation of their antibiotic substrates by phosphorylation. The polypeptide is Streptomycin 3''-kinase (aphE) (Streptomyces griseus).